The sequence spans 320 residues: Ferrochelatase (320 aa).

Fe cation-binding residues include His194 and Glu275.

Belongs to the ferrochelatase family.

The protein resides in the cytoplasm. It carries out the reaction heme b + 2 H(+) = protoporphyrin IX + Fe(2+). Its pathway is porphyrin-containing compound metabolism; protoheme biosynthesis; protoheme from protoporphyrin-IX: step 1/1. Its function is as follows. Catalyzes the ferrous insertion into protoporphyrin IX. The polypeptide is Ferrochelatase (Klebsiella pneumoniae (strain 342)).